The chain runs to 254 residues: MNSIHIKKKSNRSFRRRKVFGNEKEFDLEELDDNDIRLRQALEATKRRKIRNSIIGINAEKLLNQETKKEKQLNTANEPHEANDQTSAQSSKLIEAQLPTVEDRFAKQTNEVDINTHLLNFVEKKLKQERLAQNYSENGETNALNTKNESTVQNIKNSLHPNEHSFIRDAAALGAIREVDLGIISTDVDNLKNGRKRQKKRARMKEKLDSKALRTSEDAARDEFIEKMLKPISQDEESKGIYRRFRVYKDGTQD.

A compositionally biased stretch (basic and acidic residues) spans 69–83 (KEKQLNTANEPHEAN). Disordered regions lie at residues 69 to 90 (KEKQLNTANEPHEANDQTSAQS) and 195 to 216 (RKRQKKRARMKEKLDSKALRTS). Residues 195-204 (RKRQKKRARM) show a composition bias toward basic residues. Residues 205–216 (KEKLDSKALRTS) show a composition bias toward basic and acidic residues.

Belongs to the TLS1 family. In terms of assembly, component of the spliceosome. Interacts with brr2.

It localises to the cytoplasm. The protein resides in the nucleus. Plays a role in pre-mRNA splicing by facilitating excision of introns featuring long spacing between the branchpoint and 3'-splice site. Assists the splicing of several components involved in chromatin organization, such as several shelterin complex subunits. This Schizosaccharomyces pombe (strain 972 / ATCC 24843) (Fission yeast) protein is Splicing factor tls1.